A 136-amino-acid polypeptide reads, in one-letter code: Large ribosomal subunit protein uL16 (136 aa).

It belongs to the universal ribosomal protein uL16 family. In terms of assembly, part of the 50S ribosomal subunit.

Functionally, binds 23S rRNA and is also seen to make contacts with the A and possibly P site tRNAs. The polypeptide is Large ribosomal subunit protein uL16 (Serratia proteamaculans (strain 568)).